The primary structure comprises 248 residues: 2,3-bisphosphoglycerate-dependent phosphoglycerate mutase 2 (248 aa).

Residues 8–15 (RHGESAWN), 21–22 (TG), R60, 87–90 (EKHY), K98, 114–115 (RR), and 183–184 (GN) contribute to the substrate site. The active-site Tele-phosphohistidine intermediate is the H9. E87 acts as the Proton donor/acceptor in catalysis.

This sequence belongs to the phosphoglycerate mutase family. BPG-dependent PGAM subfamily.

It catalyses the reaction (2R)-2-phosphoglycerate = (2R)-3-phosphoglycerate. Its pathway is carbohydrate degradation; glycolysis; pyruvate from D-glyceraldehyde 3-phosphate: step 3/5. Functionally, catalyzes the interconversion of 2-phosphoglycerate and 3-phosphoglycerate. This Bacteroides thetaiotaomicron (strain ATCC 29148 / DSM 2079 / JCM 5827 / CCUG 10774 / NCTC 10582 / VPI-5482 / E50) protein is 2,3-bisphosphoglycerate-dependent phosphoglycerate mutase 2.